Reading from the N-terminus, the 278-residue chain is NAD kinase (278 aa).

The Proton acceptor role is filled by Asp56. Residues 56-57 (DG), 132-133 (NE), Arg158, Asp160, and 171-176 (TAYNKS) contribute to the NAD(+) site.

This sequence belongs to the NAD kinase family. The cofactor is a divalent metal cation.

The protein localises to the cytoplasm. The enzyme catalyses NAD(+) + ATP = ADP + NADP(+) + H(+). In terms of biological role, involved in the regulation of the intracellular balance of NAD and NADP, and is a key enzyme in the biosynthesis of NADP. Catalyzes specifically the phosphorylation on 2'-hydroxyl of the adenosine moiety of NAD to yield NADP. The protein is NAD kinase of Streptococcus agalactiae serotype III (strain NEM316).